Here is a 403-residue protein sequence, read N- to C-terminus: Putative queuine tRNA-ribosyltransferase (403 aa).

The active-site Proton acceptor is aspartate 91. Substrate is bound by residues aspartate 91 to phenylalanine 95, aspartate 177, glutamine 218, and glycine 245. Residues glycine 275–aspartate 281 form an RNA binding region. Aspartate 294 functions as the Nucleophile in the catalytic mechanism. Residues alanine 299–arginine 303 form an RNA binding; important for wobble base 34 recognition region. Positions 341, 343, 346, and 372 each coordinate Zn(2+).

This sequence belongs to the queuine tRNA-ribosyltransferase family. As to quaternary structure, homodimer. Within each dimer, one monomer is responsible for RNA recognition and catalysis, while the other monomer binds to the replacement base PreQ1. The cofactor is Zn(2+).

It carries out the reaction 7-aminomethyl-7-carbaguanine + guanosine(34) in tRNA = 7-aminomethyl-7-carbaguanosine(34) in tRNA + guanine. Its function is as follows. Catalyzes the base-exchange of a guanine (G) residue with the queuine precursor 7-aminomethyl-7-deazaguanine (PreQ1) at position 34 (anticodon wobble position) in tRNAs with GU(N) anticodons (tRNA-Asp, -Asn, -His and -Tyr). Catalysis occurs through a double-displacement mechanism. The nucleophile active site attacks the C1' of nucleotide 34 to detach the guanine base from the RNA, forming a covalent enzyme-RNA intermediate. The proton acceptor active site deprotonates the incoming PreQ1, allowing a nucleophilic attack on the C1' of the ribose to form the product. After dissociation, two additional enzymatic reactions on the tRNA convert PreQ1 to queuine (Q), resulting in the hypermodified nucleoside queuosine (7-(((4,5-cis-dihydroxy-2-cyclopenten-1-yl)amino)methyl)-7-deazaguanosine). The chain is Putative queuine tRNA-ribosyltransferase from Archaeoglobus fulgidus (strain ATCC 49558 / DSM 4304 / JCM 9628 / NBRC 100126 / VC-16).